The chain runs to 556 residues: Formate--tetrahydrofolate ligase (556 aa).

ATP is bound at residue 65–72; the sequence is TPAGEGKS.

It belongs to the formate--tetrahydrofolate ligase family.

It carries out the reaction (6S)-5,6,7,8-tetrahydrofolate + formate + ATP = (6R)-10-formyltetrahydrofolate + ADP + phosphate. The protein operates within one-carbon metabolism; tetrahydrofolate interconversion. This is Formate--tetrahydrofolate ligase from Streptococcus pneumoniae (strain Hungary19A-6).